The chain runs to 404 residues: Propionate kinase (404 aa).

It belongs to the acetokinase family. PduW subfamily.

The protein localises to the cytoplasm. It catalyses the reaction propanoate + ATP = propanoyl phosphate + ADP. Its pathway is polyol metabolism; 1,2-propanediol degradation. Works with phosphate acetyltransferase (pta) to capture exogenous propionate and regenerate propionyl-CoA during degradation of 1,2-propanediol (1,2-PD). The protein is Propionate kinase of Klebsiella pneumoniae subsp. pneumoniae (strain ATCC 700721 / MGH 78578).